Here is a 313-residue protein sequence, read N- to C-terminus: UPF0252 protein AF_0384 (313 aa).

It belongs to the UPF0252 family.

This chain is UPF0252 protein AF_0384, found in Archaeoglobus fulgidus (strain ATCC 49558 / DSM 4304 / JCM 9628 / NBRC 100126 / VC-16).